The sequence spans 261 residues: Type III pantothenate kinase (261 aa).

7 to 14 is a binding site for ATP; it reads EQGNTNTM. Position 108 to 111 (108 to 111) interacts with substrate; sequence GADR. The active-site Proton acceptor is Asp110. Position 130 (Asp130) interacts with K(+). Thr133 is an ATP binding site. Position 187 (Thr187) interacts with substrate.

Belongs to the type III pantothenate kinase family. As to quaternary structure, homodimer. NH4(+) is required as a cofactor. Requires K(+) as cofactor.

Its subcellular location is the cytoplasm. The enzyme catalyses (R)-pantothenate + ATP = (R)-4'-phosphopantothenate + ADP + H(+). It functions in the pathway cofactor biosynthesis; coenzyme A biosynthesis; CoA from (R)-pantothenate: step 1/5. In terms of biological role, catalyzes the phosphorylation of pantothenate (Pan), the first step in CoA biosynthesis. In Caulobacter vibrioides (strain ATCC 19089 / CIP 103742 / CB 15) (Caulobacter crescentus), this protein is Type III pantothenate kinase.